The chain runs to 414 residues: Enolase (414 aa).

Glutamine 162 is a binding site for (2R)-2-phosphoglycerate. The active-site Proton donor is glutamate 204. The Mg(2+) site is built by aspartate 239, glutamate 280, and aspartate 307. Lysine 332, arginine 361, serine 362, and lysine 383 together coordinate (2R)-2-phosphoglycerate. Lysine 332 functions as the Proton acceptor in the catalytic mechanism.

The protein belongs to the enolase family. The cofactor is Mg(2+).

It localises to the cytoplasm. Its subcellular location is the secreted. The protein localises to the cell surface. The enzyme catalyses (2R)-2-phosphoglycerate = phosphoenolpyruvate + H2O. It functions in the pathway carbohydrate degradation; glycolysis; pyruvate from D-glyceraldehyde 3-phosphate: step 4/5. Catalyzes the reversible conversion of 2-phosphoglycerate (2-PG) into phosphoenolpyruvate (PEP). It is essential for the degradation of carbohydrates via glycolysis. The chain is Enolase from Campylobacter jejuni subsp. doylei (strain ATCC BAA-1458 / RM4099 / 269.97).